Consider the following 360-residue polypeptide: Peptide chain release factor 1 (360 aa).

The residue at position 235 (Gln235) is an N5-methylglutamine. Positions Gln284–Thr293 are enriched in basic and acidic residues. Residues Gln284–Asn311 are disordered.

The protein belongs to the prokaryotic/mitochondrial release factor family. Methylated by PrmC. Methylation increases the termination efficiency of RF1.

Its subcellular location is the cytoplasm. In terms of biological role, peptide chain release factor 1 directs the termination of translation in response to the peptide chain termination codons UAG and UAA. This chain is Peptide chain release factor 1, found in Sodalis glossinidius (strain morsitans).